The sequence spans 173 residues: Transmembrane protein 240 (173 aa).

Transmembrane regions (helical) follow at residues 5–25 (ANTMIFMILGASIVMAIACLM) and 90–110 (LMLGLLLGFCISWFLVWMDGV). Ser-169 carries the phosphoserine modification.

Its subcellular location is the synapse. The protein resides in the cell membrane. This is Transmembrane protein 240 (Tmem240) from Mus musculus (Mouse).